The chain runs to 203 residues: UPF0637 protein MCCL_0722 (203 aa).

It belongs to the UPF0637 family.

This Macrococcus caseolyticus (strain JCSC5402) (Macrococcoides caseolyticum) protein is UPF0637 protein MCCL_0722.